The following is a 423-amino-acid chain: UPF0229 protein PSEEN0423 (423 aa).

The segment at 85 to 107 (GEHIARPQGGGGGGGRGKAGNSG) is disordered. Over residues 92 to 107 (QGGGGGGGRGKAGNSG) the composition is skewed to gly residues.

This sequence belongs to the UPF0229 family.

The chain is UPF0229 protein PSEEN0423 from Pseudomonas entomophila (strain L48).